A 309-amino-acid chain; its full sequence is (S)-sulfolactate dehydrogenase (309 aa).

Residues 151-152 (GI), D171, 231-233 (TAR), and D257 contribute to the NAD(+) site. Residue R233 is part of the active site. Residue E262 is part of the active site. H281 serves as the catalytic Proton donor. 281-284 (HIAG) contacts NAD(+).

It belongs to the D-isomer specific 2-hydroxyacid dehydrogenase family.

It catalyses the reaction (2S)-3-sulfolactate + NAD(+) = 3-sulfopyruvate + NADH + H(+). Functionally, dehydrogenase of the (R,S)-sulfolactate degradation pathway that only acts on the (S)-enantiomer of 3-sulfolactate. Together with ComC, provides a racemase system that converts (2S)-3-sulfolactate to (2R)-3-sulfolactate, which is degraded further by (2R)-sulfolactate sulfo-lyase. Specific for NAD. Also able to form sulfolactate from sulfopyruvate. The polypeptide is (S)-sulfolactate dehydrogenase (slcC) (Chromohalobacter salexigens (strain ATCC BAA-138 / DSM 3043 / CIP 106854 / NCIMB 13768 / 1H11)).